An 87-amino-acid polypeptide reads, in one-letter code: LYR motif-containing protein 2 (87 aa).

Residues 1–19 constitute a mitochondrion transit peptide; the sequence is MGSRLPPAALTLKQFLVRQ.

This sequence belongs to the complex I LYR family.

The protein resides in the mitochondrion. Its function is as follows. Involved in efficient integration of the N-module into mitochondrial respiratory chain complex I. This Xenopus laevis (African clawed frog) protein is LYR motif-containing protein 2 (lyrm2).